The sequence spans 167 residues: Bacterial non-heme ferritin (167 aa).

A Ferritin-like diiron domain is found at 1–145; that stretch reads MLSKDIIKLL…DILDKIELIG (145 aa). Fe cation contacts are provided by E17, E50, H53, E94, and Q127.

It belongs to the ferritin family. Prokaryotic subfamily. Homooligomer of 24 subunits that assemble into a spherical protein shell (12 +/- 1 nM diameter) that can sequester at least 2000 iron atoms.

The protein localises to the cytoplasm. The enzyme catalyses 4 Fe(2+) + O2 + 6 H2O = 4 iron(III) oxide-hydroxide + 12 H(+). In terms of biological role, iron-storage protein. The chain is Bacterial non-heme ferritin (ftnA) from Helicobacter pylori (strain J99 / ATCC 700824) (Campylobacter pylori J99).